Here is a 489-residue protein sequence, read N- to C-terminus: L-arabinose isomerase (489 aa).

Mn(2+)-binding residues include E300, E325, H342, and H441.

This sequence belongs to the arabinose isomerase family. Mn(2+) serves as cofactor.

The catalysed reaction is beta-L-arabinopyranose = L-ribulose. It functions in the pathway carbohydrate degradation; L-arabinose degradation via L-ribulose; D-xylulose 5-phosphate from L-arabinose (bacterial route): step 1/3. In terms of biological role, catalyzes the conversion of L-arabinose to L-ribulose. In Clostridium beijerinckii (strain ATCC 51743 / NCIMB 8052) (Clostridium acetobutylicum), this protein is L-arabinose isomerase.